A 940-amino-acid polypeptide reads, in one-letter code: Isoleucine--tRNA ligase (940 aa).

The 'HIGH' region signature appears at 58–68 (PYANGDIHIGH). L-isoleucyl-5'-AMP is bound at residue glutamate 564. The short motif at 605–609 (KMSKS) is the 'KMSKS' region element. Lysine 608 is an ATP binding site. Zn(2+) is bound by residues cysteine 903, cysteine 906, cysteine 923, and cysteine 926.

It belongs to the class-I aminoacyl-tRNA synthetase family. IleS type 1 subfamily. Monomer. The cofactor is Zn(2+).

The protein localises to the cytoplasm. The catalysed reaction is tRNA(Ile) + L-isoleucine + ATP = L-isoleucyl-tRNA(Ile) + AMP + diphosphate. Functionally, catalyzes the attachment of isoleucine to tRNA(Ile). As IleRS can inadvertently accommodate and process structurally similar amino acids such as valine, to avoid such errors it has two additional distinct tRNA(Ile)-dependent editing activities. One activity is designated as 'pretransfer' editing and involves the hydrolysis of activated Val-AMP. The other activity is designated 'posttransfer' editing and involves deacylation of mischarged Val-tRNA(Ile). The polypeptide is Isoleucine--tRNA ligase (Shewanella halifaxensis (strain HAW-EB4)).